A 590-amino-acid chain; its full sequence is Glypican-3 (590 aa).

The first 25 residues, 1–25 (MMPGLKLYGALILCVLVLPFSRPSS), serve as a signal peptide directing secretion. 7 cysteine pairs are disulfide-bonded: C30–C67, C60–C255, C68–C258, C190–C342, C245–C278, C267–C418, and C271–C406. 2 N-linked (GlcNAc...) asparagine glycosylation sites follow: N119 and N234. N414 carries N-linked (GlcNAc...) asparagine glycosylation. Disordered regions lie at residues 429–450 (PGPGLKRVHPHGSESKQKTPEP) and 476–520 (WRAR…SGLG). Acidic residues predominate over residues 495-513 (TDEDEEGLESGDCDDEDEC). S504 and S517 each carry an O-linked (Xyl...) (glycosaminoglycan) serine glycan.

It belongs to the glypican family. As to quaternary structure, heterodimer; disulfide-linked. Cleavage by a furin-like convertase results in production of alpha and beta chains which form a disulfide-linked heterodimer. O-glycosylated; contains heparan sulfate and/or chondroitin sulfate. In terms of processing, cleaved intracellularly by a furin-like convertase to generate 2 subunits, alpha and beta, which remain associated through disulfide bonds and are associated with the cell surface via the GPI-anchor. This processing is essential for its role in inhibition of hedgehog signaling. A second proteolytic event may result in cleavage of the protein on the cell surface, separating it from the GPI-anchor and leading to its shedding from the cell surface. As to expression, maternally expressed and is almost ubiquitous during blastula and gastrula stages but becomes restricted to the prospective hindbrain by 24 hours post-fertilization.

Its subcellular location is the cell membrane. Functionally, cell surface proteoglycan. Negatively regulates the hedgehog signaling pathway. Positively regulates the canonical and non-canonical Wnt signaling pathways. Binds to CD81 which decreases the availability of free CD81 for binding to the transcriptional repressor HHEX, resulting in nuclear translocation of HHEX and transcriptional repression. Inhibits the dipeptidyl peptidase activity of DPP4. Plays a role in limb patterning and skeletal development. Modulates the effects of growth factors on renal branching morphogenesis. Required for coronary vascular development. Plays a role in regulating cell movements during gastrulation. The sequence is that of Glypican-3 from Danio rerio (Zebrafish).